Here is a 243-residue protein sequence, read N- to C-terminus: Probable heat shock transcription factor (243 aa).

A DNA-binding region spans residues 9-102 (INKFIRRLYK…GDNLLPCIQR (94 aa)). Positions 121 to 164 (QLQDLLQYLNNQNFKLEGEIKSLKDRVDQQDCTINGLVQLLTRI) are involved in trimerization.

It belongs to the HSF family. Homotrimer. Homotrimerization increases the affinity of HSF1 to DNA.

It localises to the nucleus. Its function is as follows. DNA-binding transcription factor that specifically binds heat shock promoter elements (HSE) and activates transcription. The protein is Probable heat shock transcription factor of Vairimorpha ceranae (strain BRL01) (Microsporidian parasite).